A 309-amino-acid polypeptide reads, in one-letter code: Uridylate-specific endoribonuclease C (309 aa).

Residues 1–22 (MASGYDFGWIPVLLSLFTLTDA) form the signal peptide. The EndoU domain occupies 27-303 (VNQELSNIFN…IGTAYPKLLS (277 aa)). Residues N53 and N121 are each glycosylated (N-linked (GlcNAc...) asparagine). Residues H181, H197, and K242 contribute to the active site.

The protein belongs to the ENDOU family. In terms of assembly, monomer. Requires Mn(2+) as cofactor.

It localises to the secreted. It catalyses the reaction ribonucleotidyl-uridine-RNA = a 5'-end dephospho-uridine-RNA + a 3'-end 2',3'-cyclophospho-ribonucleotide-RNA. In terms of biological role, endoribonuclease that cleaves single-stranded RNAs at 5' of uridylates and releases a product with a 2',3'-cyclic phosphate at the 3'-end. The UU and GU sites are more efficiently cleaved than CU and AU sites. The chain is Uridylate-specific endoribonuclease C (endouc) from Danio rerio (Zebrafish).